The sequence spans 283 residues: MLIIETLPLLRQQIRRLRMEGKRVALVPTMGNLHDGHMKLVDEAKARADVVVVSIFVNPMQFDRPEDLARYPRTLQEDCEKLNKRKVDLVFAPSVKEIYPNGTETHTYVDVPGLSTMLEGASRPGHFRGVSTIVSKLFNLVQPDIACFGEKDFQQLALIRKMVADMGFDIEIVGVPIMRAKDGLALSSRNGYLTAEQRKIAPGLYKVLSSIADKLQAGERDLDEIIAIAGQELNEKGFRSDDIQIRDADTLLEISENSKRAVILVAAWLGDARLIDNKIVELA.

30–37 (MGNLHDGH) lines the ATP pocket. The active-site Proton donor is His37. Gln61 lines the (R)-pantoate pocket. Gln61 contributes to the beta-alanine binding site. 149–152 (GEKD) provides a ligand contact to ATP. Gln155 serves as a coordination point for (R)-pantoate. Residue 186–189 (LSSR) coordinates ATP.

Belongs to the pantothenate synthetase family. In terms of assembly, homodimer.

The protein resides in the cytoplasm. The catalysed reaction is (R)-pantoate + beta-alanine + ATP = (R)-pantothenate + AMP + diphosphate + H(+). It functions in the pathway cofactor biosynthesis; (R)-pantothenate biosynthesis; (R)-pantothenate from (R)-pantoate and beta-alanine: step 1/1. Functionally, catalyzes the condensation of pantoate with beta-alanine in an ATP-dependent reaction via a pantoyl-adenylate intermediate. The chain is Pantothenate synthetase from Escherichia coli (strain SMS-3-5 / SECEC).